Here is a 710-residue protein sequence, read N- to C-terminus: Adenylosuccinate synthetase (710 aa).

2 disordered regions span residues 1-57 (MPVR…NHAK) and 82-112 (MDDE…SAQC). Positions 11–25 (NNSSSGVSNALSSSS) are enriched in low complexity. The span at 32-43 (SPSSRENSTPLS) shows a compositional bias: polar residues. Residues 180 to 186 (GDEGKGK) and 210 to 212 (GHT) each bind GTP. The active-site Proton acceptor is the Asp-181. 2 residues coordinate Mg(2+): Asp-181 and Gly-210. Residues 181-184 (DEGK), 208-211 (NAGH), Thr-295, Lys-309, Gln-421, Thr-437, and Lys-567 contribute to the IMP site. His-211 functions as the Proton donor in the catalytic mechanism. 563–569 (AVTKKPR) contributes to the substrate binding site. Residues Arg-569 and 697-699 (GNG) each bind GTP.

Belongs to the adenylosuccinate synthetase family. In terms of assembly, homodimer. The cofactor is Mg(2+).

The protein resides in the cytoplasm. The catalysed reaction is IMP + L-aspartate + GTP = N(6)-(1,2-dicarboxyethyl)-AMP + GDP + phosphate + 2 H(+). Its pathway is purine metabolism; AMP biosynthesis via de novo pathway; AMP from IMP: step 1/2. Plays an important role in the salvage pathway for purine nucleotide biosynthesis. Catalyzes the first committed step in the biosynthesis of AMP from IMP. This is Adenylosuccinate synthetase from Leishmania braziliensis.